Reading from the N-terminus, the 258-residue chain is Alpha-hydroxynitrile lyase (258 aa).

Residues S81 and H236 each act as proton donor/acceptor in the active site.

It belongs to the AB hydrolase superfamily. Hydroxynitrile lyase family. As to quaternary structure, homodimer.

The catalysed reaction is (R)-mandelonitrile = benzaldehyde + hydrogen cyanide. Its function is as follows. Involved in cyanogenesis, the release of HCN from injured tissues. Displays R-selective hydroxynitrile lyase activity. Also accepts nitromethane (MeNO2) as a donor in a reaction with aromatic aldehydes to yield (R)-beta-nitro alcohols. The chain is Alpha-hydroxynitrile lyase from Arabidopsis thaliana (Mouse-ear cress).